Reading from the N-terminus, the 452-residue chain is Ribosomal protein uS12 methylthiotransferase RimO (452 aa).

Residues 5 to 116 enclose the MTTase N-terminal domain; that stretch reads PTIAFSHLGC…IVDVLQRTES (112 aa). [4Fe-4S] cluster contacts are provided by cysteine 14, cysteine 50, cysteine 79, cysteine 154, cysteine 158, and cysteine 161. One can recognise a Radical SAM core domain in the interval 140-369; that stretch reads TTTSAVAYLR…MATQQPIAER (230 aa). Positions 372–438 constitute a TRAM domain; sequence RAQIGRLVDV…IYDLHGEVAS (67 aa).

Belongs to the methylthiotransferase family. RimO subfamily. Requires [4Fe-4S] cluster as cofactor.

The protein resides in the cytoplasm. It catalyses the reaction L-aspartate(89)-[ribosomal protein uS12]-hydrogen + (sulfur carrier)-SH + AH2 + 2 S-adenosyl-L-methionine = 3-methylsulfanyl-L-aspartate(89)-[ribosomal protein uS12]-hydrogen + (sulfur carrier)-H + 5'-deoxyadenosine + L-methionine + A + S-adenosyl-L-homocysteine + 2 H(+). Its function is as follows. Catalyzes the methylthiolation of an aspartic acid residue of ribosomal protein uS12. The polypeptide is Ribosomal protein uS12 methylthiotransferase RimO (Synechococcus elongatus (strain ATCC 33912 / PCC 7942 / FACHB-805) (Anacystis nidulans R2)).